The following is a 408-amino-acid chain: Inhibin beta B chain (408 aa).

The N-terminal stretch at 1 to 28 (MDGLPGRALGAACLLMLAVGSLGPGVWG) is a signal peptide. Residues 29–60 (SPTPPPLPAAPQPPPPPPGAPGGSQDTCTSCG) form a disordered region. A propeptide spanning residues 29-293 (SPTPPPLPAA…GDSRHRIRKR (265 aa)) is cleaved from the precursor. Residues 30–48 (PTPPPLPAAPQPPPPPPGA) show a composition bias toward pro residues. Asn-94 carries N-linked (GlcNAc...) asparagine glycosylation. 4 cysteine pairs are disulfide-bonded: Cys-297–Cys-305, Cys-304–Cys-373, Cys-333–Cys-405, and Cys-337–Cys-407.

It belongs to the TGF-beta family. As to quaternary structure, dimeric, linked by one or more disulfide bonds. Inhibin B is a dimer of alpha and beta-B. Activin B is a homodimer of beta-B. Activin AB is a dimer of beta-A and beta-B. Interacts with FST and FSTL3.

Its subcellular location is the secreted. Its function is as follows. Inhibins and activins inhibit and activate, respectively, the secretion of follitropin by the pituitary gland. Inhibins/activins are involved in regulating a number of diverse functions such as hypothalamic and pituitary hormone secretion, gonadal hormone secretion, germ cell development and maturation, erythroid differentiation, insulin secretion, nerve cell survival, embryonic axial development or bone growth, depending on their subunit composition. Inhibins appear to oppose the functions of activins. Activin B is a dimer of alpha and beta-B that plays a role in several essential biological processes including embryonic development, stem cell maintenance and differentiation, haematopoiesis, cell proliferation and wound healing. Signals through type I receptor ACVR1C, abundantly expressed in pancreatic beta cells, and type II receptors like ACVR2A. Upon ligand binding, these receptors phosphorylate intracellular signaling mediators SMAD2 and SMAD3, which form a complex with SMAD4, translocate to the nucleus, and regulate gene expression. Plays a crucial role in the induction of hepcidin by inflammation through activation of ACVR1C and subsequent phosphorylation of SMAD1/5/8. Regulates adipocyte lipid metabolism by decreasing non-esterified fatty acids and glycerol release and increases intracellular triglyceride content. Stimulates wound healing by promoting cell migration and hair follicle regeneration through the JNK and ERK signaling pathways downstream of RHOA. In terms of biological role, inhibin B is a dimer of alpha and beta-B that plays a crucial role in the regulation of the reproductive system by inhibiting the secretion of follicle-stimulating hormone (FSH) from the anterior pituitary gland. Thereby, maintains reproductive homeostasis in both males and females. Acts as a more potent suppressor of FSH release than inhibin A. Functions as competitive receptor antagonist binding activin type II receptors with high affinity in the presence of the TGF-beta type III coreceptor/TGFBR3L. This Bos taurus (Bovine) protein is Inhibin beta B chain (INHBB).